The following is an 859-amino-acid chain: Catenin delta-1 (859 aa).

Positions S15–V44 form a coiled coil. The disordered stretch occupies residues I226–P254. Residues D243–P254 show a composition bias toward basic and acidic residues. ARM repeat units lie at residues A279–Y317, E320–Y359, R363–T401, L402–G446, L464–S503, L513–G552, A574–A614, R621–G660, D661–N700, and T701–L746.

Belongs to the beta-catenin family. As to quaternary structure, interacts with C-cadherin and with zbtb33. As to expression, ubiquitously expressed.

It is found in the cell junction. It localises to the adherens junction. The protein localises to the cytoplasm. The protein resides in the nucleus. Its subcellular location is the cell membrane. In terms of biological role, key regulator of cell-cell adhesion that associates with and regulates the cell adhesion properties of both C-, E- and N-cadherins, being critical for their surface stability. Beside cell-cell adhesion, regulates gene transcription through several transcription factors including ZBTB33/Kaiso2 and GLIS2, and the activity of Rho family GTPases and downstream cytoskeletal dynamics. Implicated both in cell transformation by SRC and in ligand-induced receptor signaling through the EGF, PDGF, CSF-1 and ERBB2 receptors. Required for gastrulation, axial elongation and development of the craniofacial skeleton and eye. The chain is Catenin delta-1 (ctnnd1) from Xenopus laevis (African clawed frog).